A 325-amino-acid chain; its full sequence is Flotillin-like protein FloA (325 aa).

2 consecutive transmembrane segments (helical) span residues 4 to 24 and 26 to 46; these read LGIV…FSFI and VGLW…TLVA.

The protein belongs to the flotillin-like FloA family. In terms of assembly, homooligomerizes.

Its subcellular location is the cell membrane. It localises to the membrane raft. Functionally, found in functional membrane microdomains (FMM) that may be equivalent to eukaryotic membrane rafts. FMMs are highly dynamic and increase in number as cells age. Flotillins are thought to be important factors in membrane fluidity. The chain is Flotillin-like protein FloA from Thermus thermophilus (strain ATCC BAA-163 / DSM 7039 / HB27).